The chain runs to 54 residues: Large ribosomal subunit protein bL33 (54 aa).

The protein belongs to the bacterial ribosomal protein bL33 family.

In Corynebacterium jeikeium (strain K411), this protein is Large ribosomal subunit protein bL33.